Reading from the N-terminus, the 771-residue chain is Semaphorin-3A (771 aa).

An N-terminal signal peptide occupies residues 1–20 (MGWLTRIVCLFWGVLLTARA). Residues 31–514 (RLKLSYKEML…STAGVAQLPL (484 aa)) form the Sema domain. The N-linked (GlcNAc...) asparagine glycan is linked to Asn-53. A disulfide bridge links Cys-103 with Cys-114. An N-linked (GlcNAc...) asparagine glycan is attached at Asn-125. 4 disulfides stabilise this stretch: Cys-132–Cys-141, Cys-269–Cys-381, Cys-293–Cys-341, and Cys-517–Cys-535. The region spanning 580 to 664 (PEERIIYGVE…GFIQTLLKVT (85 aa)) is the Ig-like C2-type domain. The N-linked (GlcNAc...) asparagine glycan is linked to Asn-590. A disulfide bond links Cys-649 and Cys-722. The span at 728–737 (RDRKQRRQRP) shows a compositional bias: basic residues. Positions 728 to 771 (RDRKQRRQRPGHTPGNSNKWKHLQENKKGRNRRTHEFERAPRSV) are disordered. A compositionally biased stretch (basic and acidic residues) spans 749–771 (HLQENKKGRNRRTHEFERAPRSV).

This sequence belongs to the semaphorin family. In terms of assembly, interacts with PLXND1. In terms of tissue distribution, expressed in the dorsal root ganglia.

The protein resides in the secreted. Functionally, involved in the development of the olfactory system and in neuronal control of puberty. Induces the collapse and paralysis of neuronal growth cones. Could serve as a ligand that guides specific growth cones by a motility-inhibiting mechanism. Binds to the complex neuropilin-1/plexin-1. The chain is Semaphorin-3A (SEMA3A) from Homo sapiens (Human).